The primary structure comprises 501 residues: Circadian clock oscillator protein KaiC (501 aa).

KaiC domains lie at 1–232 (MQVQ…ITVF) and 246–501 (IRIS…REKK). ATP-binding residues include G34, T35, G36, K37, T38, S74, K209, L210, R211, T213, H215, T275, G276, T277, G278, K279, and T280. T38 lines the Mg(2+) pocket. Mg(2+)-binding residues include T280 and E303. W316 contacts ATP. S416 is modified (phosphoserine; by autocatalysis). T417 bears the Phosphothreonine; by autocatalysis mark. The ATP site is built by R436, K442, M443, R444, S446, H448, and K450.

This sequence belongs to the KaiC family. Homohexamer; hexamerization is dependent on ATP-binding. Component of the KaiBC complex. KaiC interacts with SasA, activating its autokinase function and leading to RpaA activation. The cofactor is Mg(2+). Phosphorylated on serine and threonine residues by autocatalysis. Has a 4 step phosphorylation cycle; the autokinase acts first on Thr-417, then Ser-416. When Ser-416 is modified KaiC switches to an autophosphatase mode, acting first on phospho-Thr-417 then phospho-Ser-416.

The catalysed reaction is L-seryl-[protein] + ATP = O-phospho-L-seryl-[protein] + ADP + H(+). The enzyme catalyses L-threonyl-[protein] + ATP = O-phospho-L-threonyl-[protein] + ADP + H(+). It carries out the reaction ATP + H2O = ADP + phosphate + H(+). Its function is as follows. Central component of the KaiBC oscillator complex, which constitutes the main circadian regulator in cyanobacteria. Its composition changes during the circadian cycle to control KaiC phosphorylation. Autophosphorylates and has a weak ATPase activity; ATPase activity defines the circadian period. In Prochlorococcus marinus (strain SARG / CCMP1375 / SS120), this protein is Circadian clock oscillator protein KaiC.